The sequence spans 501 residues: Solute carrier family 2, facilitated glucose transporter member 5 (501 aa).

An N-acetylmethionine modification is found at M1. Residues 1–18 (MEPQDPVKREGRLTPVIV) are Cytoplasmic-facing. The helical transmembrane segment at 19–39 (LATLIAAFGSSFQYGYNVAAI) threads the bilayer. Y32 serves as a coordination point for D-fructose. The Extracellular portion of the chain corresponds to 40–68 (NSPSEFMKDFYNYTYYDRVGEYMNEFYLT). Residue N51 is glycosylated (N-linked (GlcNAc...) asparagine). The chain crosses the membrane as a helical span at residues 69–91 (LLWSVTVSMFPFGGFLGSLMVGP). Over 92–98 (LVNNLGR) the chain is Cytoplasmic. A helical membrane pass occupies residues 99–119 (KGTLLFNNIFSIVPALLMGFS). Residues 120 to 126 (ELAKSFE) lie on the Extracellular side of the membrane. Residues 127–149 (MIIVARVLVGICAGLSSNVVPMY) form a helical membrane-spanning segment. Topologically, residues 150 to 161 (LGELAPKNWRGA) are cytoplasmic. Residues 162–182 (LGVVPQLFITIGILVAQIFGL) form a helical membrane-spanning segment. Residue Q167 coordinates D-fructose. At 183–192 (RSLLANEEGW) the chain is on the extracellular side. A helical transmembrane segment spans residues 193–213 (PILLGLTGIPAVLQLLFLPFF). Over 214-277 (PESPRYLLIQ…LFKMRSLRWQ (64 aa)) the chain is Cytoplasmic. The chain crosses the membrane as a helical span at residues 278-298 (VISIIVLMAGQQLSGVNAIYY). D-fructose is bound by residues Q288 and 296–298 (IYY). Residues 299 to 313 (YADQIYLSAGVNEDD) lie on the Extracellular side of the membrane. The chain crosses the membrane as a helical span at residues 314-334 (VQYVTAGTGAVNVLITVCAIF). Over 335–342 (VVELMGRR) the chain is Cytoplasmic. The helical transmembrane segment at 343 to 363 (FLLLLGFSVCFTACCVLTGAL) threads the bilayer. Residues 364–371 (ALQDVISW) lie on the Extracellular side of the membrane. A helical transmembrane segment spans residues 372-394 (MPYVSIACVISYVIGHALGPSPI). H387 serves as a coordination point for D-fructose. The Cytoplasmic segment spans residues 395–412 (PALLVTEIFLQSSRPAAY). A helical membrane pass occupies residues 413–433 (MVAGTVHWLSNFTVGLVFPFI). Residue 419 to 420 (HW) coordinates D-fructose. The Extracellular segment spans residues 434 to 439 (QVGLGA). Residues 440-460 (YSFVIFAVICLLTTVYIFLII) form a helical membrane-spanning segment. At 461–501 (PETKSKTFIEINRIFIKMNKVPGVHPEKEELKEFPPSTARQ) the chain is on the cytoplasmic side.

Belongs to the major facilitator superfamily. Sugar transporter (TC 2.A.1.1) family. Glucose transporter subfamily.

Its subcellular location is the apical cell membrane. It localises to the cell membrane. The protein localises to the sarcolemma. The catalysed reaction is D-fructose(out) = D-fructose(in). In terms of biological role, functions as a fructose transporter that has only low activity with other monosaccharides. Can mediate the uptake of deoxyglucose, but with low efficiency. Essential for fructose uptake in the small intestine. Plays a role in the regulation of salt uptake and blood pressure in response to dietary fructose. Required for the development of high blood pressure in response to high dietary fructose intake. The sequence is that of Solute carrier family 2, facilitated glucose transporter member 5 from Bos taurus (Bovine).